The following is a 361-amino-acid chain: Ribosomal RNA large subunit methyltransferase M (361 aa).

Residues Ser187, 220-223 (CPGG), Asp239, Asp259, and Asp276 each bind S-adenosyl-L-methionine. Residue Lys305 is the Proton acceptor of the active site.

This sequence belongs to the class I-like SAM-binding methyltransferase superfamily. RNA methyltransferase RlmE family. RlmM subfamily. Monomer.

It is found in the cytoplasm. The enzyme catalyses cytidine(2498) in 23S rRNA + S-adenosyl-L-methionine = 2'-O-methylcytidine(2498) in 23S rRNA + S-adenosyl-L-homocysteine + H(+). Its function is as follows. Catalyzes the 2'-O-methylation at nucleotide C2498 in 23S rRNA. In Shewanella putrefaciens (strain CN-32 / ATCC BAA-453), this protein is Ribosomal RNA large subunit methyltransferase M.